The sequence spans 616 residues: Methionine--tRNA ligase, chloroplastic/mitochondrial (616 aa).

The 'HIGH' region signature appears at 78–88 (YYVNAPPHMGS). Residues 366–370 (KMGKS) carry the 'KMSKS' region motif. Lysine 369 is a binding site for ATP. A compositionally biased stretch (basic and acidic residues) spans 582-593 (LNPEKEEDEKKP). Residues 582-602 (LNPEKEEDEKKPKVGKKTGKA) are disordered.

This sequence belongs to the class-I aminoacyl-tRNA synthetase family.

It localises to the plastid. Its subcellular location is the chloroplast. It is found in the mitochondrion. The enzyme catalyses tRNA(Met) + L-methionine + ATP = L-methionyl-tRNA(Met) + AMP + diphosphate. The chain is Methionine--tRNA ligase, chloroplastic/mitochondrial from Arabidopsis thaliana (Mouse-ear cress).